We begin with the raw amino-acid sequence, 374 residues long: Alcohol dehydrogenase S chain (374 aa).

The residue at position 2 (serine 2) is an N-acetylserine. Cysteine 47, histidine 68, cysteine 98, cysteine 101, cysteine 104, cysteine 112, and cysteine 174 together coordinate Zn(2+). Residues 199–204 (GLGGVG), aspartate 223, lysine 228, 292–294 (VGV), and arginine 369 each bind NAD(+).

It belongs to the zinc-containing alcohol dehydrogenase family. Class-I subfamily. As to quaternary structure, dimer of identical or non-identical chains of two types (E and S) coded by 2 separate genes at different loci. The cofactor is Zn(2+).

It localises to the cytoplasm. The catalysed reaction is a primary alcohol + NAD(+) = an aldehyde + NADH + H(+). It carries out the reaction a secondary alcohol + NAD(+) = a ketone + NADH + H(+). The polypeptide is Alcohol dehydrogenase S chain (Equus caballus (Horse)).